The sequence spans 170 residues: Small ribosomal subunit protein uS13m (170 aa).

Positions 130–170 (LKKKPTNRKERRIFNKIKKLQDKHNKQQQKNKKSKKWKTKK) are disordered. 2 stretches are compositionally biased toward basic residues: residues 132-147 (KKPTNRKERRIFNKIK) and 155-170 (KQQQKNKKSKKWKTKK).

The protein belongs to the universal ribosomal protein uS13 family. As to quaternary structure, part of the small ribosomal subunit.

It is found in the mitochondrion. Its function is as follows. Located at the top of the head of the small subunit, it contacts several helices of the small subunit rRNA. The sequence is that of Small ribosomal subunit protein uS13m (mrps13) from Dictyostelium citrinum (Slime mold).